A 420-amino-acid polypeptide reads, in one-letter code: D-tagatose-1,6-bisphosphate aldolase subunit GatZ (420 aa).

It belongs to the GatZ/KbaZ family. GatZ subfamily. As to quaternary structure, forms a complex with GatY.

The protein operates within carbohydrate metabolism; D-tagatose 6-phosphate degradation; D-glyceraldehyde 3-phosphate and glycerone phosphate from D-tagatose 6-phosphate: step 2/2. Its function is as follows. Component of the tagatose-1,6-bisphosphate aldolase GatYZ that is required for full activity and stability of the Y subunit. Could have a chaperone-like function for the proper and stable folding of GatY. When expressed alone, GatZ does not show any aldolase activity. Is involved in the catabolism of galactitol. The protein is D-tagatose-1,6-bisphosphate aldolase subunit GatZ of Escherichia coli O6:H1 (strain CFT073 / ATCC 700928 / UPEC).